The following is a 3790-amino-acid chain: Transcription-associated protein 1 (3790 aa).

6 HEAT repeats span residues 98–136 (RQHV…HFRP), 335–381 (TDLR…HVRQ), 740–778 (DLLY…ELCL), 1185–1223 (AKAT…IQSK), 1332–1370 (IGYK…GVTL), and 1826–1864 (AIHK…AMPL). In terms of domain architecture, FAT spans 2610–3173 (LLAYLGKSHN…YFPIRTLYLT (564 aa)). The PI3K/PI4K catalytic domain occupies 3429–3753 (MPRVEIVQKN…AVDIIMTRFN (325 aa)). The G-loop stretch occupies residues 3435-3441 (VQKNNTA). Residues 3616-3624 (NLTRLNADM) form a catalytic loop region. The segment at 3636–3661 (ISYFKFDVNDDKCQLNQHRPVPFRLT) is activation loop. Residues 3758–3790 (FDSIENKKISVLVQSATNIDNLCRMDPAWHPWL) form the FATC domain.

Belongs to the PI3/PI4-kinase family. TRA1 subfamily. In terms of assembly, component of the Tip60 chromatin-remodeling complex which contains the catalytic subunit Tip60 and the subunits Domino, Tra1, Brd8, E(Pc), DMAP1, Pontin, Reptin, Ing3, Act87E, BAP55, Mrg15, MrgBP, Gas41 and YL-1. Probable component of some SAGA complex. Interacts with Spt3, Gcn5, Ada3 and Ada2b. Ubiquitous.

The protein localises to the nucleus. The protein resides in the cytoplasm. It localises to the chromosome. Part of the Tip60 chromatin-remodeling complex which is involved in DNA repair. Upon induction of DNA double-strand breaks, this complex acetylates phosphorylated H2AV in nucleosomes and exchanges it with unmodified H2AV. During wing development, required for activity of Notch and its coactivator mam. Function in promoting mam function is likely to involve both the Tip60 and SAGA complexes. This is Transcription-associated protein 1 (Nipped-A) from Drosophila melanogaster (Fruit fly).